Consider the following 301-residue polypeptide: UDP-N-acetylenolpyruvoylglucosamine reductase (301 aa).

In terms of domain architecture, FAD-binding PCMH-type spans 26–193 (KTGGPAQYLA…VSATFGLEPG (168 aa)). R172 is a catalytic residue. The Proton donor role is filled by S222. E292 is a catalytic residue.

The protein belongs to the MurB family. The cofactor is FAD.

Its subcellular location is the cytoplasm. It carries out the reaction UDP-N-acetyl-alpha-D-muramate + NADP(+) = UDP-N-acetyl-3-O-(1-carboxyvinyl)-alpha-D-glucosamine + NADPH + H(+). The protein operates within cell wall biogenesis; peptidoglycan biosynthesis. In terms of biological role, cell wall formation. The sequence is that of UDP-N-acetylenolpyruvoylglucosamine reductase from Lactobacillus johnsonii (strain CNCM I-12250 / La1 / NCC 533).